The sequence spans 595 residues: Glutamyl-tRNA(Gln) amidotransferase subunit B, mitochondrial (595 aa).

The transit peptide at 1 to 72 (MPRLWYSRYL…RAKSQSRNGR (72 aa)) directs the protein to the mitochondrion.

This sequence belongs to the GatB/GatE family. GatB subfamily. Subunit of the heterotrimeric GatCAB amidotransferase (AdT) complex, composed of A, B and C subunits.

The protein localises to the mitochondrion. The catalysed reaction is L-glutamyl-tRNA(Gln) + L-glutamine + ATP + H2O = L-glutaminyl-tRNA(Gln) + L-glutamate + ADP + phosphate + H(+). Allows the formation of correctly charged Gln-tRNA(Gln) through the transamidation of misacylated Glu-tRNA(Gln) in the mitochondria. The reaction takes place in the presence of glutamine and ATP through an activated gamma-phospho-Glu-tRNA(Gln). This Talaromyces marneffei (strain ATCC 18224 / CBS 334.59 / QM 7333) (Penicillium marneffei) protein is Glutamyl-tRNA(Gln) amidotransferase subunit B, mitochondrial.